The chain runs to 274 residues: Small nuclear ribonucleoprotein-associated protein B (274 aa).

The region spanning 5–85 (PKSSKMLQYI…VVSMSVEAPP (81 aa)) is the Sm domain. The interval 148–274 (PGGGVPPPMG…PMGRGGFQRK (127 aa)) is disordered. The stretch at 162-171 (PPQGFPPGGP) is repeat 1. The tract at residues 162–265 (PPQGFPPGGP…PPQGFPPGGP (104 aa)) is 6 X 10 AA repeats of P-P-Q-G-F-P-P-G-G-P. A compositionally biased stretch (low complexity) spans 173 to 187 (PQGAFNNNPNNNNGG). Repeat copies occupy residues 188–197 (PPQGFPPGGP), 204–213 (PPQGFPPGGP), 225–234 (PPQGFPPGGP), 241–250 (PPQGFPPGGP), and 256–265 (PPQGFPPGGP). Over residues 216–226 (GPNLNNGNMPP) the composition is skewed to low complexity. Residues 265–274 (PMGRGGFQRK) show a composition bias toward gly residues.

This sequence belongs to the snRNP SmB/SmN family.

It is found in the cytoplasm. The protein localises to the cytosol. It localises to the nucleus. In terms of biological role, plays a role in pre-mRNA splicing as a core component of the spliceosomal U1, U2, U4 and U5 small nuclear ribonucleoproteins (snRNPs), the building blocks of the spliceosome. This Dictyostelium discoideum (Social amoeba) protein is Small nuclear ribonucleoprotein-associated protein B (snrpb).